The primary structure comprises 353 residues: Small ribosomal subunit biogenesis GTPase RsgA (353 aa).

A disordered region spans residues 1-24 (MSKNKLSKGQQRRVKANHQRRLKT). The segment covering 10–23 (QQRRVKANHQRRLK) has biased composition (basic residues). The region spanning 104-274 (ASVLTRPDFY…VIDSPGVREF (171 aa)) is the CP-type G domain. GTP contacts are provided by residues 160-163 (NKID) and 214-222 (GQSGVGKSS). The Zn(2+) site is built by C298, C303, H305, and C311.

The protein belongs to the TRAFAC class YlqF/YawG GTPase family. RsgA subfamily. Monomer. Associates with 30S ribosomal subunit, binds 16S rRNA. It depends on Zn(2+) as a cofactor.

It is found in the cytoplasm. In terms of biological role, one of several proteins that assist in the late maturation steps of the functional core of the 30S ribosomal subunit. Helps release RbfA from mature subunits. May play a role in the assembly of ribosomal proteins into the subunit. Circularly permuted GTPase that catalyzes slow GTP hydrolysis, GTPase activity is stimulated by the 30S ribosomal subunit. This Klebsiella pneumoniae subsp. pneumoniae (strain ATCC 700721 / MGH 78578) protein is Small ribosomal subunit biogenesis GTPase RsgA.